A 41-amino-acid chain; its full sequence is Disintegrin obtustatin (41 aa).

4 disulfides stabilise this stretch: Cys-1–Cys-10, Cys-6–Cys-29, Cys-7–Cys-34, and Cys-19–Cys-36. Residues 1–41 (CTTGPCCRQCKLKPAGTTCWKTSLTSHYCTGKSCDCPLYPG) enclose the Disintegrin domain. The Cell attachment site; atypical (KTS) motif lies at 21–23 (KTS).

The protein belongs to the disintegrin family. Short disintegrin subfamily. As to quaternary structure, monomer. In terms of tissue distribution, expressed by the venom gland.

Its subcellular location is the secreted. Its function is as follows. Is a potent and selective inhibitor of alpha-1/beta-1 (ITGA1/ITGB1) integrin. It blocks the adhesion of alpha-1/beta-1-expressing K562 cells to immobilized collagens IV and I with IC(50) of 2 and 0.5 nM, respectively. Potently inhibits angiogenesis in chicken and in mouse model and reduces tumor development by half. Is 25-fold less potent than viperistatin. The sequence is that of Disintegrin obtustatin from Macrovipera lebetina obtusa (Levant blunt-nosed viper).